Here is a 161-residue protein sequence, read N- to C-terminus: PTS system glucose-specific EIIA component (161 aa).

A PTS EIIA type-1 domain is found at 31–135; sequence DPVFSKKIVG…SILTPVVISN (105 aa). Zn(2+) contacts are provided by His68 and His83. His83 acts as the Tele-phosphohistidine intermediate; for EIIA activity in catalysis. His83 carries the phosphohistidine; by HPr modification.

It depends on Zn(2+) as a cofactor.

The protein resides in the cytoplasm. Functionally, the phosphoenolpyruvate-dependent sugar phosphotransferase system (sugar PTS), a major carbohydrate active transport system, catalyzes the phosphorylation of incoming sugar substrates concomitantly with their translocation across the cell membrane. The enzyme II complex composed of PtsG and Crr is involved in glucose transport. This is PTS system glucose-specific EIIA component (crr) from Buchnera aphidicola subsp. Acyrthosiphon pisum (strain APS) (Acyrthosiphon pisum symbiotic bacterium).